A 135-amino-acid chain; its full sequence is Probable 5-hydroxyisourate hydrolase R09H10.3 (135 aa).

The first 20 residues, M1–S20, serve as a signal peptide directing secretion. Residues H30, R68, and Y132 each coordinate substrate.

This sequence belongs to the transthyretin family. 5-hydroxyisourate hydrolase subfamily. As to quaternary structure, homotetramer.

The catalysed reaction is 5-hydroxyisourate + H2O = 5-hydroxy-2-oxo-4-ureido-2,5-dihydro-1H-imidazole-5-carboxylate + H(+). Catalyzes the hydrolysis of 5-hydroxyisourate (HIU) to 2-oxo-4-hydroxy-4-carboxy-5-ureidoimidazoline (OHCU). In Caenorhabditis elegans, this protein is Probable 5-hydroxyisourate hydrolase R09H10.3.